The chain runs to 254 residues: Protein Thf1 (254 aa).

A coiled-coil region spans residues 182 to 241; that stretch reads EEKMKKDLDLYRSNLEKMNQVLEVLEDALAVERQRREKAEAEAKAKTAEATVATETNDEQ. Residues 215-228 show a composition bias toward basic and acidic residues; sequence QRREKAEAEAKAKT. A disordered region spans residues 215–254; that stretch reads QRREKAEAEAKAKTAEATVATETNDEQDEQKETSESGSDA.

It belongs to the THF1 family.

May be involved in photosynthetic membrane biogenesis. The protein is Protein Thf1 of Picosynechococcus sp. (strain ATCC 27264 / PCC 7002 / PR-6) (Agmenellum quadruplicatum).